We begin with the raw amino-acid sequence, 206 residues long: Ribosomal RNA large subunit methyltransferase E (206 aa).

Residues Gly61, Trp63, Asp81, Asp97, and Asp122 each contribute to the S-adenosyl-L-methionine site. Lys162 (proton acceptor) is an active-site residue.

The protein belongs to the class I-like SAM-binding methyltransferase superfamily. RNA methyltransferase RlmE family.

It is found in the cytoplasm. The catalysed reaction is uridine(2552) in 23S rRNA + S-adenosyl-L-methionine = 2'-O-methyluridine(2552) in 23S rRNA + S-adenosyl-L-homocysteine + H(+). Functionally, specifically methylates the uridine in position 2552 of 23S rRNA at the 2'-O position of the ribose in the fully assembled 50S ribosomal subunit. This Neisseria meningitidis serogroup C / serotype 2a (strain ATCC 700532 / DSM 15464 / FAM18) protein is Ribosomal RNA large subunit methyltransferase E.